A 511-amino-acid polypeptide reads, in one-letter code: 2,3-bisphosphoglycerate-independent phosphoglycerate mutase (511 aa).

Asp12 is a Mn(2+) binding site. At Tyr36 the chain carries Phosphotyrosine. Residue Ser62 coordinates Mn(2+). Ser62 (phosphoserine intermediate) is an active-site residue. Substrate contacts are provided by residues His123, 153–154 (RD), Arg185, Arg191, 261–264 (RPDR), and Lys336. Mn(2+)-binding residues include Asp403, His407, Asp444, His445, and His462.

It belongs to the BPG-independent phosphoglycerate mutase family. Monomer. Mn(2+) is required as a cofactor.

The enzyme catalyses (2R)-2-phosphoglycerate = (2R)-3-phosphoglycerate. The protein operates within carbohydrate degradation; glycolysis; pyruvate from D-glyceraldehyde 3-phosphate: step 3/5. In terms of biological role, essential for rapid growth and for sporulation. Catalyzes the interconversion of 2-phosphoglycerate and 3-phosphoglycerate. This Bacillus velezensis (strain DSM 23117 / BGSC 10A6 / LMG 26770 / FZB42) (Bacillus amyloliquefaciens subsp. plantarum) protein is 2,3-bisphosphoglycerate-independent phosphoglycerate mutase.